The sequence spans 169 residues: S-ribosylhomocysteine lyase (169 aa).

Fe cation-binding residues include His-54, His-58, and Cys-128.

This sequence belongs to the LuxS family. As to quaternary structure, homodimer. It depends on Fe cation as a cofactor.

The catalysed reaction is S-(5-deoxy-D-ribos-5-yl)-L-homocysteine = (S)-4,5-dihydroxypentane-2,3-dione + L-homocysteine. Its function is as follows. Involved in the synthesis of autoinducer 2 (AI-2) which is secreted by bacteria and is used to communicate both the cell density and the metabolic potential of the environment. The regulation of gene expression in response to changes in cell density is called quorum sensing. Catalyzes the transformation of S-ribosylhomocysteine (RHC) to homocysteine (HC) and 4,5-dihydroxy-2,3-pentadione (DPD). This is S-ribosylhomocysteine lyase from Shewanella baltica (strain OS223).